The sequence spans 859 residues: Replication origin-binding protein (859 aa).

One can recognise a Helicase ATP-binding domain in the interval 70 to 235; that stretch reads PLAADARRVT…AALRGAGSVH (166 aa). An ATP-binding site is contributed by 83–90; that stretch reads APMGSGKT.

Belongs to the herpesviridae OriBP family. As to quaternary structure, homodimer. Interacts with the major DNA-binding protein. Interacts with the helicase/primase component UL8 and the polymerase accessory protein.

It is found in the host nucleus. Functionally, functions as a docking protein to recruit essential components of the viral replication machinery to viral DNA origins. In the presence of the major DNA-binding protein, opens dsDNA leading to a conformational change in the origin that facilitates DNA unwinding and subsequent replication. The protein is Replication origin-binding protein (UL9) of Bovine herpesvirus 1.1 (strain Cooper) (BoHV-1).